The sequence spans 456 residues: Probable multidrug resistance protein NorM (456 aa).

A run of 12 helical transmembrane segments spans residues 13–34 (QFLTIFTPIVITQLTLFSMTFF), 54–76 (SSFWAPVNAAFSGLLMAITPIIA), 95–117 (LYIALFLAFILILINFLVVPTIL), 132–154 (HFLNGICIGIPAFFISAILRSFI), 161–183 (RVTMLITLCTVPFNIFLNYCFIF), 193–215 (GAGSGYATGITYWLVVLVSVILI), 244–266 (IGVPNGLTILFETSIFSAVTILM), 286–308 (LLYAFPLSVASTLTILGGYETGA), 321–343 (GMAAAIFIGCVNGAILFFFRDII), 358–380 (MHFLVYAILFQFADAVLSPVLGA), 387–409 (VTVTSIVAFISYWLIGLPVGYGL), and 414–436 (LGPFGYWIGLSTGLFVAAFILSI).

This sequence belongs to the multi antimicrobial extrusion (MATE) (TC 2.A.66.1) family.

Its subcellular location is the cell membrane. Functionally, multidrug efflux pump. The chain is Probable multidrug resistance protein NorM (norM) from Listeria monocytogenes serotype 4b (strain F2365).